A 352-amino-acid chain; its full sequence is Pheromone-regulated membrane protein 6 (352 aa).

At 1 to 36 (MESSLQKLKFQDIDINLIPTAKWTTKLQYILYTWCQ) the chain is on the extracellular side. The helical transmembrane segment at 37 to 57 (SILHVAMFFSDIYTCIKLLAF) threads the bilayer. Topologically, residues 58 to 76 (NTWSNNIIQPFLEFRISKW) are cytoplasmic. A helical transmembrane segment spans residues 77–97 (LFSGCILCSSLILIWELVIGL). Residues 98–227 (RVYRKKEITS…VILSFMLFSF (130 aa)) are Extracellular-facing. The helical transmembrane segment at 228–248 (IIWVILISKLILSIIIFIIFI) threads the bilayer. Topologically, residues 249–352 (RPRFLSSKRK…FPQKYKHKYI (104 aa)) are cytoplasmic.

The protein belongs to the KCH1 low affinity K(+) transporter family.

It is found in the cell membrane. The protein localises to the bud tip. The protein resides in the vacuole lumen. It carries out the reaction K(+)(in) = K(+)(out). Functionally, low affinity potassium transporter that, with KCH1, participates in high-affinity Ca(2+) influx system (HACS) activation during the response to mating pheromone. Directly promotes K(+) influx and HACS may electrochemically respond to this K(+) influx. KCH1 and PRM6/KCH2 act at the apex of the calcium signaling pathway that is used for survival during prolonged exposures to mating pheromones. The sequence is that of Pheromone-regulated membrane protein 6 from Saccharomyces cerevisiae (strain ATCC 204508 / S288c) (Baker's yeast).